The primary structure comprises 670 residues: Methionine--tRNA ligase (670 aa).

The 'HIGH' region signature appears at 14-24 (PYANGHLHLGH). Residues C145, C148, C158, and C161 each coordinate Zn(2+). Positions 330–334 (KMSKS) match the 'KMSKS' region motif. Position 333 (K333) interacts with ATP. Positions 570-670 (DFAKVDLRIA…AGAFPGMKVK (101 aa)) constitute a tRNA-binding domain.

The protein belongs to the class-I aminoacyl-tRNA synthetase family. MetG type 1 subfamily. As to quaternary structure, homodimer. Zn(2+) serves as cofactor.

Its subcellular location is the cytoplasm. The catalysed reaction is tRNA(Met) + L-methionine + ATP = L-methionyl-tRNA(Met) + AMP + diphosphate. In terms of biological role, is required not only for elongation of protein synthesis but also for the initiation of all mRNA translation through initiator tRNA(fMet) aminoacylation. The sequence is that of Methionine--tRNA ligase from Legionella pneumophila (strain Corby).